Here is a 112-residue protein sequence, read N- to C-terminus: uncharacterized protein (112 aa).

Residues 1–27 (MIASIGDSAEPPLRRTRRAQQQDRPPT) are disordered.

This is an uncharacterized protein from Orgyia pseudotsugata multicapsid polyhedrosis virus (OpMNPV).